A 318-amino-acid chain; its full sequence is Thymidylate synthase (318 aa).

DUMP contacts are provided by residues Arg-25 and 180–181 (RR). Cys-200 serves as the catalytic Nucleophile. DUMP is bound by residues 220–223 (RSGD), Asn-231, and 261–263 (HIY). Asp-223 is a (6R)-5,10-methylene-5,6,7,8-tetrahydrofolate binding site. Residue Ala-317 coordinates (6R)-5,10-methylene-5,6,7,8-tetrahydrofolate.

The protein belongs to the thymidylate synthase family. Bacterial-type ThyA subfamily. Homodimer.

The protein localises to the cytoplasm. It catalyses the reaction dUMP + (6R)-5,10-methylene-5,6,7,8-tetrahydrofolate = 7,8-dihydrofolate + dTMP. It functions in the pathway pyrimidine metabolism; dTTP biosynthesis. Catalyzes the reductive methylation of 2'-deoxyuridine-5'-monophosphate (dUMP) to 2'-deoxythymidine-5'-monophosphate (dTMP) while utilizing 5,10-methylenetetrahydrofolate (mTHF) as the methyl donor and reductant in the reaction, yielding dihydrofolate (DHF) as a by-product. This enzymatic reaction provides an intracellular de novo source of dTMP, an essential precursor for DNA biosynthesis. The protein is Thymidylate synthase of Lactobacillus acidophilus (strain ATCC 700396 / NCK56 / N2 / NCFM).